The following is a 1330-amino-acid chain: Kinectin (1330 aa).

The Cytoplasmic portion of the chain corresponds to 1–6 (MEFYES). The helical; Signal-anchor for type II membrane protein transmembrane segment at 7-29 (TYFIVLIPSVVITVIFLFFWLFM) threads the bilayer. The Lumenal portion of the chain corresponds to 30 to 1330 (KETLYDEVLA…KEKEHYQVLE (1301 aa)). Disordered regions lie at residues 49–81 (PTKT…ESVP) and 108–218 (SSSV…KQKA). Residues Ser75 and Ser77 each carry the phosphoserine modification. The span at 113-122 (ERKKKEKKHK) shows a compositional bias: basic residues. The span at 123 to 135 (PVLEEQVTKESDV) shows a compositional bias: basic and acidic residues. Thr153 carries the post-translational modification Phosphothreonine. Ser156 bears the Phosphoserine mark. Basic residues predominate over residues 161–171 (SKKKPGQKKSK). 5 N-linked (GlcNAc...) asparagine glycosylation sites follow: Asn172, Asn435, Asn772, Asn904, and Asn1055. Positions 172–182 (NGSDDQDKKVE) are enriched in basic and acidic residues. Residues 332-1329 (HQLQEKDKLL…TKEKEHYQVL (998 aa)) adopt a coiled-coil conformation. Phosphoserine is present on Ser1085. A glycan (N-linked (GlcNAc...) asparagine) is linked at Asn1236. Phosphoserine is present on Ser1286. An N-linked (GlcNAc...) asparagine glycan is attached at Asn1302.

The protein belongs to the kinectin family. As to quaternary structure, parallel homodimers formed between the membrane-bound and the cytosolic form, and also between 2 cytosolic forms. In terms of tissue distribution, expressed in male brain, heart, kidney, liver, lung, spleen and testis.

The protein resides in the endoplasmic reticulum membrane. In terms of biological role, receptor for kinesin thus involved in kinesin-driven vesicle motility. In Vulpes vulpes (Red fox), this protein is Kinectin (KTN1).